The sequence spans 225 residues: Protein-L-isoaspartate O-methyltransferase (225 aa).

S75 is an active-site residue.

It belongs to the methyltransferase superfamily. L-isoaspartyl/D-aspartyl protein methyltransferase family.

It is found in the cytoplasm. It carries out the reaction [protein]-L-isoaspartate + S-adenosyl-L-methionine = [protein]-L-isoaspartate alpha-methyl ester + S-adenosyl-L-homocysteine. Catalyzes the methyl esterification of L-isoaspartyl residues in peptides and proteins that result from spontaneous decomposition of normal L-aspartyl and L-asparaginyl residues. It plays a role in the repair and/or degradation of damaged proteins. This Stenotrophomonas maltophilia (strain R551-3) protein is Protein-L-isoaspartate O-methyltransferase.